The primary structure comprises 202 residues: MDPQLPEPEPLVSLIEALRRLPGVGVRSARRMAYHLMQHDLQGADMLGRALAGAVQNLRHCARCNSFTEDDICATCANPKRDPSVLCVVETPADQNMIEASHGYRGLYYVLMGRVAPLEGIGPRELDFQRLLERASDGVVREVILATNFTAEGETTAHFLGEVLAGKGLKVTRLARGVPAGSELEYVDAGTIAWALMERKSA.

Residues C61–C76 form a C4-type zinc finger. In terms of domain architecture, Toprim spans S84–P179.

It belongs to the RecR family.

Functionally, may play a role in DNA repair. It seems to be involved in an RecBC-independent recombinational process of DNA repair. It may act with RecF and RecO. This is Recombination protein RecR from Bordetella petrii (strain ATCC BAA-461 / DSM 12804 / CCUG 43448).